The sequence spans 32 residues: Delta-conotoxin-like MVID (32 aa).

3 disulfide bridges follow: C3-C18, C10-C22, and C17-C27. P14 is subject to 4-hydroxyproline.

The protein belongs to the conotoxin O1 superfamily. In terms of tissue distribution, expressed by the venom duct.

Its subcellular location is the secreted. Functionally, delta-conotoxins bind to site 6 of voltage-gated sodium channels (Nav) and inhibit the inactivation process. The chain is Delta-conotoxin-like MVID from Conus magus (Magical cone).